A 230-amino-acid chain; its full sequence is MAKDTTGRLHVTVKTGGKRKLSSKLWLERQLNDPYVAQAKRDGWRSRASFKLIEMDDKHRFLKPGMTVVDLGAAPGGWSQVAAKRVGAAEGKGRVIAIDLLEMPEIVGVTFARLDFLDDSAPDKLLAMMDGAADVVLSDMAANTTGHRKTDQLRIVGLVESAAAFTSDVLRPGGTFIAKVFQSGADAGLLVQLKRDFQTVRHVKPAASRQDSSERYVMATGFRGGRRDKC.

5 residues coordinate S-adenosyl-L-methionine: G76, W78, D99, D115, and D139. K179 serves as the catalytic Proton acceptor.

The protein belongs to the class I-like SAM-binding methyltransferase superfamily. RNA methyltransferase RlmE family.

It localises to the cytoplasm. The catalysed reaction is uridine(2552) in 23S rRNA + S-adenosyl-L-methionine = 2'-O-methyluridine(2552) in 23S rRNA + S-adenosyl-L-homocysteine + H(+). Specifically methylates the uridine in position 2552 of 23S rRNA at the 2'-O position of the ribose in the fully assembled 50S ribosomal subunit. This Nitrobacter winogradskyi (strain ATCC 25391 / DSM 10237 / CIP 104748 / NCIMB 11846 / Nb-255) protein is Ribosomal RNA large subunit methyltransferase E.